The following is a 202-amino-acid chain: P25 protein (202 aa).

The Flavodoxin-like domain occupies 7–195; sequence VAIVIYSTYG…EIARIQGETF (189 aa). Serine 181 is modified (phosphoserine).

Belongs to the WrbA family. In terms of assembly, homodimer.

In terms of biological role, unknown. Target of pap1 transcription factor. Confers brefeldin A resistance in S.pombe. The polypeptide is P25 protein (obr1) (Schizosaccharomyces pombe (strain 972 / ATCC 24843) (Fission yeast)).